Here is a 222-residue protein sequence, read N- to C-terminus: Protein-L-isoaspartate O-methyltransferase (222 aa).

Ser69 is a catalytic residue.

The protein belongs to the methyltransferase superfamily. L-isoaspartyl/D-aspartyl protein methyltransferase family.

The protein resides in the cytoplasm. The catalysed reaction is [protein]-L-isoaspartate + S-adenosyl-L-methionine = [protein]-L-isoaspartate alpha-methyl ester + S-adenosyl-L-homocysteine. Functionally, catalyzes the methyl esterification of L-isoaspartyl residues in peptides and proteins that result from spontaneous decomposition of normal L-aspartyl and L-asparaginyl residues. It plays a role in the repair and/or degradation of damaged proteins. The chain is Protein-L-isoaspartate O-methyltransferase from Nitrosomonas europaea (strain ATCC 19718 / CIP 103999 / KCTC 2705 / NBRC 14298).